The following is a 287-amino-acid chain: Probable endonuclease 4 (287 aa).

Residues histidine 69, histidine 109, glutamate 144, aspartate 178, histidine 181, histidine 215, aspartate 228, histidine 230, and glutamate 260 each contribute to the Zn(2+) site.

The protein belongs to the AP endonuclease 2 family. It depends on Zn(2+) as a cofactor.

It catalyses the reaction Endonucleolytic cleavage to 5'-phosphooligonucleotide end-products.. Endonuclease IV plays a role in DNA repair. It cleaves phosphodiester bonds at apurinic or apyrimidinic (AP) sites, generating a 3'-hydroxyl group and a 5'-terminal sugar phosphate. The polypeptide is Probable endonuclease 4 (Thermotoga maritima (strain ATCC 43589 / DSM 3109 / JCM 10099 / NBRC 100826 / MSB8)).